The following is a 316-amino-acid chain: Secondary metabolism regulator laeA (316 aa).

Belongs to the methyltransferase superfamily. LaeA methyltransferase family. In terms of assembly, component of the heterotrimeric velvet complex composed of laeA, ve1 and velB; Ve1 acting as a bridging protein between laeA and velB. Interacts directly with veA.

The protein localises to the nucleus. Its subcellular location is the cytoplasm. It carries out the reaction L-methionyl-[protein] + S-adenosyl-L-methionine = S-methyl-L-methionyl-[protein] + S-adenosyl-L-homocysteine. Its function is as follows. Methyltransferase that performs automethylation. No other methyl-accepting substrate has been identified yet. Component of the velvet transcription factor complex that acts as a global regulator for secondary metabolite gene expression. Controls the expression of the mycotoxins trichothecenes and zearalenon gene clusters. Negatively controls perithecial induction, but positively controls virulence toward the host plant. In Gibberella zeae (strain ATCC MYA-4620 / CBS 123657 / FGSC 9075 / NRRL 31084 / PH-1) (Wheat head blight fungus), this protein is Secondary metabolism regulator laeA.